A 661-amino-acid chain; its full sequence is Fructose-1,6-bisphosphatase class 3 (661 aa).

It belongs to the FBPase class 3 family. Requires Mn(2+) as cofactor.

It catalyses the reaction beta-D-fructose 1,6-bisphosphate + H2O = beta-D-fructose 6-phosphate + phosphate. It participates in carbohydrate biosynthesis; gluconeogenesis. This is Fructose-1,6-bisphosphatase class 3 from Clostridioides difficile (strain 630) (Peptoclostridium difficile).